Consider the following 475-residue polypeptide: FAD-dependent monooxygenase janM (475 aa).

Residues 8-24 form a helical membrane-spanning segment; the sequence is VIIVGGSIGGLTLAHCL. The FAD site is built by E35, G49, and R108. N-linked (GlcNAc...) asparagine glycosylation is present at N147. Positions 299 and 312 each coordinate FAD. Residues 432–451 traverse the membrane as a helical segment; sequence GWRFHAMLCILMLAILYTWV.

Belongs to the paxM FAD-dependent monooxygenase family. It depends on FAD as a cofactor.

The protein localises to the membrane. It functions in the pathway secondary metabolite biosynthesis. In terms of biological role, FAD-dependent monooxygenase; part of the gene cluster that mediates the biosynthesis of the indole diterpenes janthitremanes such as shearinine K or shearinine A. The geranylgeranyl diphosphate (GGPP) synthase janG catalyzes the first step in janthitremane biosynthesis via conversion of farnesyl pyrophosphate and isopentyl pyrophosphate into geranylgeranyl pyrophosphate (GGPP). Condensation of indole-3-glycerol phosphate with GGPP by the prenyl transferase janC then forms 3-geranylgeranylindole (3-GGI). Epoxidation by the FAD-dependent monooxygenase janM leads to a epoxidized-GGI that is substrate of the terpene cyclase janB for cyclization to yield paspaline. Paspaline is subsequently converted to 13-desoxypaspaline by the cytochrome P450 monooxygenase janP, via beta-PC-M6 in a series of alpha-face oxidations. The cytochrome P450 monooxygenase janQ is proposed to carry out sequential beta-face oxidation steps at C-7 and C-13 of 13-desoxypaspaline to form paspalicine and paspalinine respectively. The indole diterpene prenyltransferase janD may then convert paspalinine into shearinine K which is substrate of janO and/or additional enzymes for oxidation and cyclization to generate shearinine A. The protein is FAD-dependent monooxygenase janM of Penicillium janthinellum (Penicillium vitale).